Here is a 97-residue protein sequence, read N- to C-terminus: Exodeoxyribonuclease 7 small subunit (97 aa).

A disordered region spans residues 1 to 22 (MAKTASPGATPPDNGTEPLPDN).

It belongs to the XseB family. Heterooligomer composed of large and small subunits.

The protein localises to the cytoplasm. It catalyses the reaction Exonucleolytic cleavage in either 5'- to 3'- or 3'- to 5'-direction to yield nucleoside 5'-phosphates.. Bidirectionally degrades single-stranded DNA into large acid-insoluble oligonucleotides, which are then degraded further into small acid-soluble oligonucleotides. The chain is Exodeoxyribonuclease 7 small subunit from Burkholderia ambifaria (strain MC40-6).